The sequence spans 422 residues: MALQMKQSPSMGVRRASQPVLPPRPIVHRGVGSVSRRPAVVVKASLLDAASAASAVDAVHHATQLYTLAEGGPIDVLAQFFEFVLQTLDEGLESAKIPYSYGFAIIALTVLVKVATFPLTQKQVESTLSLQALQPRVKELQAKYADDPENLQLETARLYKEAGVNPLAGCFPTLATIPVFIGLYNALSNAAKEGLLTEGFFWIPSLGGPTTIGGGLEWLVPFENGAPPVGWANAAAYLVMPVLLVASQYASQKIISSQNNQDPSQQQAQAILKFLPLMIGWFSLNVPSGLTLYWFVNNLLSTGQQLYLKATVKVNIPEAIKAPATAGSSTPIVKPKEERVKKVTGKELGSRKKRRNDDGEEVEDVEVEVVSSGSSSSSGSNGASGRKGEKFRALKAREAAAKAASTVSAGAGGSEEGKDNSA.

Residues 1–10 (MALQMKQSPS) show a composition bias toward polar residues. The segment at 1–22 (MALQMKQSPSMGVRRASQPVLP) is disordered. Residues 65-85 (LYTLAEGGPIDVLAQFFEFVL) traverse the membrane as a helical segment. Residues 86 to 96 (QTLDEGLESAK) lie on the Stromal side of the membrane. Residues 97–117 (IPYSYGFAIIALTVLVKVATF) traverse the membrane as a helical segment. Over 118 to 166 (PLTQKQVESTLSLQALQPRVKELQAKYADDPENLQLETARLYKEAGVNP) the chain is Lumenal. The helical transmembrane segment at 167–187 (LAGCFPTLATIPVFIGLYNAL) threads the bilayer. At 188–225 (SNAAKEGLLTEGFFWIPSLGGPTTIGGGLEWLVPFENG) the chain is on the stromal side. A helical transmembrane segment spans residues 226–246 (APPVGWANAAAYLVMPVLLVA). Residues 247 to 275 (SQYASQKIISSQNNQDPSQQQAQAILKFL) lie on the Lumenal side of the membrane. Residues 276–296 (PLMIGWFSLNVPSGLTLYWFV) form a helical membrane-spanning segment. Topologically, residues 297-422 (NNLLSTGQQL…GSEEGKDNSA (126 aa)) are stromal. Positions 325–422 (TAGSSTPIVK…GSEEGKDNSA (98 aa)) are disordered. Positions 334–350 (KPKEERVKKVTGKELGS) are enriched in basic and acidic residues. Positions 358 to 367 (DGEEVEDVEV) are enriched in acidic residues. Residues 368–380 (EVVSSGSSSSSGS) show a composition bias toward low complexity. A compositionally biased stretch (basic and acidic residues) spans 386–400 (RKGEKFRALKAREAA).

Belongs to the OXA1/ALB3/YidC (TC 2.A.9.2) family.

It is found in the plastid. The protein localises to the chloroplast thylakoid membrane. Its function is as follows. Required for the insertion of some light-harvesting complexes (LHC) proteins into the chloroplast thylakoid membrane. Essential for the assembly and activity of LHC I and II. Its function is probably partly distinct from that of ALB3.1. This is Inner membrane ALBINO3-like protein 2, chloroplastic (ALB3.2) from Chlamydomonas reinhardtii (Chlamydomonas smithii).